The primary structure comprises 158 residues: 6,7-dimethyl-8-ribityllumazine synthase (158 aa).

5-amino-6-(D-ribitylamino)uracil is bound by residues phenylalanine 22, 57–59, and 81–83; these read AVE and AVI. 86–87 serves as a coordination point for (2S)-2-hydroxy-3-oxobutyl phosphate; sequence GT. Histidine 89 (proton donor) is an active-site residue. Residue phenylalanine 114 participates in 5-amino-6-(D-ribitylamino)uracil binding. Arginine 128 lines the (2S)-2-hydroxy-3-oxobutyl phosphate pocket.

The protein belongs to the DMRL synthase family. Forms an icosahedral capsid composed of 60 subunits, arranged as a dodecamer of pentamers.

It carries out the reaction (2S)-2-hydroxy-3-oxobutyl phosphate + 5-amino-6-(D-ribitylamino)uracil = 6,7-dimethyl-8-(1-D-ribityl)lumazine + phosphate + 2 H2O + H(+). The protein operates within cofactor biosynthesis; riboflavin biosynthesis; riboflavin from 2-hydroxy-3-oxobutyl phosphate and 5-amino-6-(D-ribitylamino)uracil: step 1/2. Catalyzes the formation of 6,7-dimethyl-8-ribityllumazine by condensation of 5-amino-6-(D-ribitylamino)uracil with 3,4-dihydroxy-2-butanone 4-phosphate. This is the penultimate step in the biosynthesis of riboflavin. This chain is 6,7-dimethyl-8-ribityllumazine synthase, found in Shewanella halifaxensis (strain HAW-EB4).